The primary structure comprises 195 residues: Sec-independent protein translocase protein TatB (195 aa).

A helical transmembrane segment spans residues 1-21 (MFDIGFSELVLIFIVGLVVLG). The tract at residues 166–195 (DESQFAAYYPPDDDLASPTPSQPQDKQNVS) is disordered. Over residues 183-195 (PTPSQPQDKQNVS) the composition is skewed to polar residues.

Belongs to the TatB family. The Tat system comprises two distinct complexes: a TatABC complex, containing multiple copies of TatA, TatB and TatC subunits, and a separate TatA complex, containing only TatA subunits. Substrates initially bind to the TatABC complex, which probably triggers association of the separate TatA complex to form the active translocon.

It localises to the cell inner membrane. Part of the twin-arginine translocation (Tat) system that transports large folded proteins containing a characteristic twin-arginine motif in their signal peptide across membranes. Together with TatC, TatB is part of a receptor directly interacting with Tat signal peptides. TatB may form an oligomeric binding site that transiently accommodates folded Tat precursor proteins before their translocation. The sequence is that of Sec-independent protein translocase protein TatB from Actinobacillus pleuropneumoniae serotype 5b (strain L20).